Here is a 1081-residue protein sequence, read N- to C-terminus: Protein QUIRKY (1081 aa).

Residues Met-1–Tyr-124 enclose the C2 1 domain. 2 disordered regions span residues Asp-154 to Pro-198 and Pro-238 to Lys-323. Residues Gln-163–Gln-176 are compositionally biased toward low complexity. The span at Asn-248–Pro-257 shows a compositional bias: basic and acidic residues. A compositionally biased stretch (pro residues) spans Gln-258 to Ser-268. C2 domains follow at residues Thr-318–Tyr-440, Ser-477–His-605, and Val-652–Tyr-778. Ca(2+) contacts are provided by Glu-351, Ser-352, Asp-408, and Ser-413. The next 3 membrane-spanning stretches (helical) occupy residues Trp-879–Ile-899, Leu-916–Ile-936, and Leu-1024–Val-1044.

This sequence belongs to the MCTP family. As to quaternary structure, interacts with SUB/SCM and POQ at the plasma membrane. Binds to SUB/SCM at plasmodesmata (PD) in root epidermal cells to promote tissue morphogenesis. Ca(2+) serves as cofactor. As to expression, observed mainly in flowers, and, to a lower extent, in seedlings, roots, shoots, leaves, stems and inflorescences. Expressed in the vascular tissues of roots, cotyledons and rosette leaves. Accumulates in roots meristems.

The protein resides in the cell membrane. Its subcellular location is the cytoplasm. It is found in the golgi apparatus membrane. It localises to the cell junction. The protein localises to the plasmodesma. May be involved in Ca 2(+)-dependent signaling and membrane trafficking. Plays a role in fruit dehiscence. Components of the machinery involved in organ development mediated by the receptor-like kinase STRUBBELIG (SUB). Collaboratively with SUB and POQ, regulates cell growth anisotropy during gynoecium development, thus linking together cell-cell communication and cellular growth. Together with SUB/SCM, links RLK-dependent signal transduction and intercellular communication mediated by plasmodesmata (PD) to regulate tissue morphogenesis. May function as a signaling molecule by regulating the trafficking of other regulators. In Arabidopsis thaliana (Mouse-ear cress), this protein is Protein QUIRKY.